A 221-amino-acid polypeptide reads, in one-letter code: UPF0502 protein PSPA7_1674 (221 aa).

It belongs to the UPF0502 family.

This is UPF0502 protein PSPA7_1674 from Pseudomonas paraeruginosa (strain DSM 24068 / PA7) (Pseudomonas aeruginosa (strain PA7)).